Here is a 326-residue protein sequence, read N- to C-terminus: UDP-3-O-acylglucosamine N-acyltransferase (326 aa).

H235 functions as the Proton acceptor in the catalytic mechanism.

It belongs to the transferase hexapeptide repeat family. LpxD subfamily. Homotrimer.

It catalyses the reaction a UDP-3-O-[(3R)-3-hydroxyacyl]-alpha-D-glucosamine + a (3R)-hydroxyacyl-[ACP] = a UDP-2-N,3-O-bis[(3R)-3-hydroxyacyl]-alpha-D-glucosamine + holo-[ACP] + H(+). The protein operates within bacterial outer membrane biogenesis; LPS lipid A biosynthesis. In terms of biological role, catalyzes the N-acylation of UDP-3-O-acylglucosamine using 3-hydroxyacyl-ACP as the acyl donor. Is involved in the biosynthesis of lipid A, a phosphorylated glycolipid that anchors the lipopolysaccharide to the outer membrane of the cell. This chain is UDP-3-O-acylglucosamine N-acyltransferase, found in Helicobacter hepaticus (strain ATCC 51449 / 3B1).